The following is a 326-amino-acid chain: Beta-ketoacyl-[acyl-carrier-protein] synthase III (326 aa).

Catalysis depends on residues C120 and H253. The interval 254–258 (QANIR) is ACP-binding. The active site involves N283.

It belongs to the thiolase-like superfamily. FabH family. Homodimer.

The protein localises to the cytoplasm. The catalysed reaction is malonyl-[ACP] + acetyl-CoA + H(+) = 3-oxobutanoyl-[ACP] + CO2 + CoA. It functions in the pathway lipid metabolism; fatty acid biosynthesis. Its function is as follows. Catalyzes the condensation reaction of fatty acid synthesis by the addition to an acyl acceptor of two carbons from malonyl-ACP. Catalyzes the first condensation reaction which initiates fatty acid synthesis and may therefore play a role in governing the total rate of fatty acid production. Possesses both acetoacetyl-ACP synthase and acetyl transacylase activities. Its substrate specificity determines the biosynthesis of branched-chain and/or straight-chain of fatty acids. In Cupriavidus pinatubonensis (strain JMP 134 / LMG 1197) (Cupriavidus necator (strain JMP 134)), this protein is Beta-ketoacyl-[acyl-carrier-protein] synthase III.